A 709-amino-acid polypeptide reads, in one-letter code: Polyribonucleotide nucleotidyltransferase (709 aa).

The Mg(2+) site is built by aspartate 491 and aspartate 497. In terms of domain architecture, KH spans 557–617; sequence PKSESFMIPP…ENLQKAKTFI (61 aa). The S1 motif domain occupies 641–709; the sequence is GERFVGKIKK…KNKVELGLVE (69 aa).

It belongs to the polyribonucleotide nucleotidyltransferase family. Mg(2+) is required as a cofactor.

It is found in the cytoplasm. The enzyme catalyses RNA(n+1) + phosphate = RNA(n) + a ribonucleoside 5'-diphosphate. In terms of biological role, involved in mRNA degradation. Catalyzes the phosphorolysis of single-stranded polyribonucleotides processively in the 3'- to 5'-direction. This Helicobacter hepaticus (strain ATCC 51449 / 3B1) protein is Polyribonucleotide nucleotidyltransferase.